A 248-amino-acid polypeptide reads, in one-letter code: Probable transcriptional regulatory protein MCA1220 (248 aa).

This sequence belongs to the TACO1 family.

The protein resides in the cytoplasm. This chain is Probable transcriptional regulatory protein MCA1220, found in Methylococcus capsulatus (strain ATCC 33009 / NCIMB 11132 / Bath).